The primary structure comprises 152 residues: SsrA-binding protein (152 aa).

This sequence belongs to the SmpB family.

The protein resides in the cytoplasm. Its function is as follows. Required for rescue of stalled ribosomes mediated by trans-translation. Binds to transfer-messenger RNA (tmRNA), required for stable association of tmRNA with ribosomes. tmRNA and SmpB together mimic tRNA shape, replacing the anticodon stem-loop with SmpB. tmRNA is encoded by the ssrA gene; the 2 termini fold to resemble tRNA(Ala) and it encodes a 'tag peptide', a short internal open reading frame. During trans-translation Ala-aminoacylated tmRNA acts like a tRNA, entering the A-site of stalled ribosomes, displacing the stalled mRNA. The ribosome then switches to translate the ORF on the tmRNA; the nascent peptide is terminated with the 'tag peptide' encoded by the tmRNA and targeted for degradation. The ribosome is freed to recommence translation, which seems to be the essential function of trans-translation. The chain is SsrA-binding protein from Helicobacter pylori (strain J99 / ATCC 700824) (Campylobacter pylori J99).